A 141-amino-acid chain; its full sequence is HTH-type transcriptional repressor NsrR (141 aa).

The HTH rrf2-type domain maps to Gln2–Thr129. The H-T-H motif DNA-binding region spans Ile28 to Gln51. The [2Fe-2S] cluster site is built by Cys91, Cys96, and Cys102.

[2Fe-2S] cluster serves as cofactor.

Functionally, nitric oxide-sensitive repressor of genes involved in protecting the cell against nitrosative stress. May require iron for activity. In Aliivibrio salmonicida (strain LFI1238) (Vibrio salmonicida (strain LFI1238)), this protein is HTH-type transcriptional repressor NsrR.